Reading from the N-terminus, the 511-residue chain is Glutamate/gamma-aminobutyrate antiporter (511 aa).

Residues 1 to 14 (MATLVQTGKAKQLT) lie on the Cytoplasmic side of the membrane. A helical transmembrane segment spans residues 15-35 (LLGFFAITASMVMAVYEYPTF). The Periplasmic portion of the chain corresponds to 36-41 (ATSGFS). Residues 42–62 (LVFFLLLGGILWFIPVGLCAA) traverse the membrane as a helical segment. Topologically, residues 63 to 93 (EMATVDGWEEGGVFAWVSNTLGPRWGFAAIS) are cytoplasmic. Residues 94 to 114 (FGYLQIAIGFIPMLYFVLGAL) traverse the membrane as a helical segment. Residues 115–127 (SYILKWPALNEDP) lie on the Periplasmic side of the membrane. Residues 128 to 148 (ITKTIAALIILWALALTQFGG) traverse the membrane as a helical segment. The Cytoplasmic segment spans residues 149-157 (TKYTARIAK). The helical transmembrane segment at 158 to 178 (VGFFAGILLPAFILIALAAIY) threads the bilayer. The Periplasmic segment spans residues 179 to 200 (LHSGAPVAIEMDSKTFFPDFSK). Residues 201 to 221 (VGTLVVFVAFILSYMGVEASA) traverse the membrane as a helical segment. Residues 222-239 (THVNEMSNPGRDYPLAML) are Cytoplasmic-facing. A helical membrane pass occupies residues 240-260 (LLMVAAICLSSVGGLSIAMVI). The Periplasmic portion of the chain corresponds to 261–291 (PGNEINLSAGVMQTFTVLMSHVAPEIEWTVR). A helical membrane pass occupies residues 292-312 (VISALLLLGVLAEIASWIVGP). At 313–335 (SRGMYVTAQKNLLPAAFAKMNKN) the chain is on the cytoplasmic side. A helical transmembrane segment spans residues 336–356 (GVPVTLVISQLVITSIALIIL). Residues 357–366 (TNTGGGNNMS) are Periplasmic-facing. The helical transmembrane segment at 367–387 (FLIALALTVVIYLCAYFMLFI) threads the bilayer. The Cytoplasmic portion of the chain corresponds to 388 to 412 (GYIVLVLKHPDLKRTFNIPGGKGVK). A helical transmembrane segment spans residues 413–433 (LVVAIVGLLTSIMAFIVSFLP). The Periplasmic portion of the chain corresponds to 434 to 445 (PDNIQGDSTDMY). Residues 446–466 (VELLVVSFLVVLALPFILYAV) traverse the membrane as a helical segment. Residues 467 to 511 (HDRKGKANTGVTLEPINSQNAPKGHFFLHPRARSPHYIVMNDKKH) lie on the Cytoplasmic side of the membrane.

It belongs to the amino acid-polyamine-organocation (APC) superfamily. Glutamate:GABA antiporter (GGA) (TC 2.A.3.7) family.

The protein localises to the cell inner membrane. It catalyses the reaction 4-aminobutanoate(in) + L-glutamate(out) = 4-aminobutanoate(out) + L-glutamate(in). Its activity is regulated as follows. Shows pH-dependent activity. The glutamate analog L-trans-pyrrolidine-2,4-dicarboxylic acid (L-PDC) blocks the uptake of glutamate by selective inhibition. Functionally, involved in glutaminase-dependent acid resistance. Exchanges extracellular glutamate (Glu) for intracellular gamma-aminobutyric acid (GABA) under acidic conditions. The ability to survive the extremely acidic conditions of the stomach is essential for successful colonization of the host by commensal and pathogenic bacteria. This Escherichia coli O157:H7 protein is Glutamate/gamma-aminobutyrate antiporter (gadC).